We begin with the raw amino-acid sequence, 477 residues long: PTS system glucose-specific EIICB component (477 aa).

The Cytoplasmic segment spans residues Met1–Lys14. A PTS EIIC type-1 domain is found at Met1–Asp388. The chain crosses the membrane as a helical span at residues Ser15–Ala35. Residues Asn36–Glu50 are Periplasmic-facing. The chain crosses the membrane as a helical span at residues Ala51–Phe71. Residues Thr72–Ala79 lie on the Cytoplasmic side of the membrane. The helical transmembrane segment at Leu80–Val100 threads the bilayer. Residues Leu101–Lys111 are Periplasmic-facing. A helical membrane pass occupies residues His112–Phe132. Topologically, residues Asn133–Arg151 are cytoplasmic. The chain crosses the membrane as a helical span at residues Phe152–Trp172. At Pro173–Asn190 the chain is on the periplasmic side. A helical transmembrane segment spans residues Pro191–His211. Residues His212–Lys249 are Cytoplasmic-facing. Residues Leu250–His270 form a helical membrane-spanning segment. The Periplasmic segment spans residues Ser271 to Lys279. A helical transmembrane segment spans residues Val280–Ile300. Over Glu301–Pro309 the chain is Cytoplasmic. The helical transmembrane segment at Ile310–Gly330 threads the bilayer. Residues Met331–Trp355 lie on the Periplasmic side of the membrane. A helical membrane pass occupies residues Leu356–Ile376. The Cytoplasmic portion of the chain corresponds to Lys377–His477. The 79-residue stretch at Ser399–His477 folds into the PTS EIIB type-1 domain. Cys421 functions as the Phosphocysteinsyse intermediate; for EIIB activity in the catalytic mechanism. Residue Cys421 is modified to Phosphocysteine.

It is found in the cell inner membrane. The catalysed reaction is N(pros)-phospho-L-histidyl-[protein] + D-glucose(out) = D-glucose 6-phosphate(in) + L-histidyl-[protein]. Its function is as follows. The phosphoenolpyruvate-dependent sugar phosphotransferase system (sugar PTS), a major carbohydrate active transport system, catalyzes the phosphorylation of incoming sugar substrates concomitantly with their translocation across the cell membrane. The enzyme II complex composed of PtsG and Crr is involved in glucose transport. Also functions as a chemoreceptor monitoring the environment for changes in sugar concentration. The polypeptide is PTS system glucose-specific EIICB component (ptsG) (Escherichia coli O6:H1 (strain CFT073 / ATCC 700928 / UPEC)).